A 393-amino-acid polypeptide reads, in one-letter code: Putative N(4)-(beta-N-acetylglucosaminyl)-L-asparaginase CG1827 (393 aa).

Positions 1–23 (MRRHLRASLWILCLATMAFSILA) are cleaved as a signal peptide. N-linked (GlcNAc...) asparagine glycosylation is found at N49 and N64. Intrachain disulfides connect C97–C102 and C196–C212. The Nucleophile role is filled by T243. Residues 271–274 (RVGD) and 294–297 (TGDG) each bind substrate. C354 and C381 are joined by a disulfide.

This sequence belongs to the Ntn-hydrolase family. In terms of assembly, heterotetramer of two alpha and two beta chains arranged as a dimer of alpha/beta heterodimers. In terms of processing, cleaved into an alpha and beta chain by autocatalysis; this activates the enzyme. The N-terminal residue of the beta subunit is responsible for the nucleophile hydrolase activity.

It carries out the reaction N(4)-(beta-N-acetyl-D-glucosaminyl)-L-asparagine + H2O = N-acetyl-beta-D-glucosaminylamine + L-aspartate + H(+). Functionally, cleaves the GlcNAc-Asn bond which joins oligosaccharides to the peptide of asparagine-linked glycoproteins. This chain is Putative N(4)-(beta-N-acetylglucosaminyl)-L-asparaginase CG1827, found in Drosophila melanogaster (Fruit fly).